Reading from the N-terminus, the 90-residue chain is Evasin P1128 (90 aa).

An N-terminal signal peptide occupies residues 1 to 18 (MFIALGIQLFVAVTYAAG). Cystine bridges form between Cys29–Cys51, Cys33–Cys53, and Cys44–Cys64. Asn32 is a glycosylation site (N-linked (GlcNAc...) asparagine).

It localises to the secreted. Functionally, salivary chemokine-binding protein which binds to host chemokines CXCL1, CXCL2, CXCL3, CXCL5 and CXCL8. The protein is Evasin P1128 of Ixodes ricinus (Common tick).